The chain runs to 449 residues: Required for meiotic nuclear division protein 1 homolog (449 aa).

The transit peptide at 1–16 directs the protein to the mitochondrion; sequence MPATLLRAVAGSHRVL.

Belongs to the RMD1/sif2 family. Homooligomer.

Its subcellular location is the mitochondrion. In terms of biological role, required for mitochondrial translation, possibly by coordinating the assembly or maintenance of the mitochondrial ribosome. This chain is Required for meiotic nuclear division protein 1 homolog (RMND1), found in Pongo abelii (Sumatran orangutan).